The following is a 198-amino-acid chain: Glycerol-3-phosphate acyltransferase (198 aa).

The next 5 membrane-spanning stretches (helical) occupy residues 1 to 21 (MTII…GFLF), 77 to 97 (HLFE…PIWL), 111 to 131 (MFIA…LIIL), 136 to 156 (IVSL…FLDI), and 157 to 177 (GVTN…VILK).

The protein belongs to the PlsY family. Probably interacts with PlsX.

Its subcellular location is the cell inner membrane. It carries out the reaction an acyl phosphate + sn-glycerol 3-phosphate = a 1-acyl-sn-glycero-3-phosphate + phosphate. The protein operates within lipid metabolism; phospholipid metabolism. Catalyzes the transfer of an acyl group from acyl-phosphate (acyl-PO(4)) to glycerol-3-phosphate (G3P) to form lysophosphatidic acid (LPA). This enzyme utilizes acyl-phosphate as fatty acyl donor, but not acyl-CoA or acyl-ACP. The chain is Glycerol-3-phosphate acyltransferase from Prochlorococcus marinus (strain MIT 9515).